Here is a 128-residue protein sequence, read N- to C-terminus: Methylglyoxal synthase (128 aa).

An MGS-like domain is found at 1–128 (MRIALIAHDR…MQDHPGNRQA (128 aa)). Substrate-binding positions include histidine 8, lysine 12, 34–37 (TGTT), and 54–55 (SG). The active-site Proton donor/acceptor is aspartate 60. Position 87 (histidine 87) interacts with substrate.

This sequence belongs to the methylglyoxal synthase family.

It carries out the reaction dihydroxyacetone phosphate = methylglyoxal + phosphate. Its function is as follows. Catalyzes the formation of methylglyoxal from dihydroxyacetone phosphate. The protein is Methylglyoxal synthase of Moorella thermoacetica (strain ATCC 39073 / JCM 9320).